We begin with the raw amino-acid sequence, 130 residues long: Holo-[acyl-carrier-protein] synthase (130 aa).

Residues D8 and E62 each contribute to the Mg(2+) site.

Belongs to the P-Pant transferase superfamily. AcpS family. Requires Mg(2+) as cofactor.

The protein resides in the cytoplasm. It catalyses the reaction apo-[ACP] + CoA = holo-[ACP] + adenosine 3',5'-bisphosphate + H(+). Transfers the 4'-phosphopantetheine moiety from coenzyme A to a Ser of acyl-carrier-protein. The chain is Holo-[acyl-carrier-protein] synthase from Herminiimonas arsenicoxydans.